A 164-amino-acid chain; its full sequence is Ecotin (164 aa).

A signal peptide spans 1 to 20; the sequence is MKMFVPAVVFAALASASAWA. A disulfide bridge connects residues Cys-72 and Cys-109.

This sequence belongs to the protease inhibitor I11 (ecotin) family. In terms of assembly, homodimer.

It localises to the periplasm. Its function is as follows. General inhibitor of pancreatic serine proteases: inhibits chymotrypsin, trypsin, elastases, factor X, kallikrein as well as a variety of other proteases. The sequence is that of Ecotin from Salmonella enteritidis PT4 (strain P125109).